The following is a 432-amino-acid chain: Serine--tRNA ligase (432 aa).

Residue 238-240 (TAE) participates in L-serine binding. 269–271 (RSE) contacts ATP. Residue E292 coordinates L-serine. 356-359 (EVSS) is an ATP binding site. An L-serine-binding site is contributed by S392.

This sequence belongs to the class-II aminoacyl-tRNA synthetase family. Type-1 seryl-tRNA synthetase subfamily. In terms of assembly, homodimer. The tRNA molecule binds across the dimer.

It localises to the cytoplasm. It carries out the reaction tRNA(Ser) + L-serine + ATP = L-seryl-tRNA(Ser) + AMP + diphosphate + H(+). The enzyme catalyses tRNA(Sec) + L-serine + ATP = L-seryl-tRNA(Sec) + AMP + diphosphate + H(+). The protein operates within aminoacyl-tRNA biosynthesis; selenocysteinyl-tRNA(Sec) biosynthesis; L-seryl-tRNA(Sec) from L-serine and tRNA(Sec): step 1/1. In terms of biological role, catalyzes the attachment of serine to tRNA(Ser). Is also able to aminoacylate tRNA(Sec) with serine, to form the misacylated tRNA L-seryl-tRNA(Sec), which will be further converted into selenocysteinyl-tRNA(Sec). This chain is Serine--tRNA ligase, found in Buchnera aphidicola subsp. Baizongia pistaciae (strain Bp).